Consider the following 311-residue polypeptide: MIIFAIESSHDDTSFALLDDNKPIWMKTITQTEIHKQYGGTVPEIASRLHVKNIGILIEDIKSQININKIDLIAYTKEPGLVGSLHVGYVVAQSLALILNKKIVGLNHLEGHFYSAFIGKEVIYPALGLLVSGGHSQLVLYNSKDDFKIIGQTQDDAVGEVYDKVARKLNLGFPGGPLIDQIWKNNHKLYTAHLTIPKTEGFFDFSFSGIKTNVINLINNCASRNEQINVNQIATEFQNTIVEYLKEHMETAIKKFSPKCIVLAGGVSANFAIREMFYSLHKNVFLPDLEYTTDNAMMIARLAYEKFRYNN.

Fe cation is bound by residues His-108 and His-112. Residues 130–134, Asp-163, Gly-176, Asp-180, and Asn-270 each bind substrate; that span reads LVSGG. Asp-294 contributes to the Fe cation binding site.

This sequence belongs to the KAE1 / TsaD family. The cofactor is Fe(2+).

It localises to the cytoplasm. It carries out the reaction L-threonylcarbamoyladenylate + adenosine(37) in tRNA = N(6)-L-threonylcarbamoyladenosine(37) in tRNA + AMP + H(+). In terms of biological role, required for the formation of a threonylcarbamoyl group on adenosine at position 37 (t(6)A37) in tRNAs that read codons beginning with adenine. Is involved in the transfer of the threonylcarbamoyl moiety of threonylcarbamoyl-AMP (TC-AMP) to the N6 group of A37, together with TsaE and TsaB. TsaD likely plays a direct catalytic role in this reaction. This is tRNA N6-adenosine threonylcarbamoyltransferase from Metamycoplasma arthritidis (strain 158L3-1) (Mycoplasma arthritidis).